Reading from the N-terminus, the 494-residue chain is Casein kinase I homolog HRR25 (494 aa).

In terms of domain architecture, Protein kinase spans 9–278 (FRIGRKIGSG…LARLFKDLSI (270 aa)). Residues 15-23 (IGSGSFGDI) and Lys-38 each bind ATP. Asp-128 acts as the Proton acceptor in catalysis. Ser-143 bears the Phosphoserine mark. Residues 394 to 494 (RQQQPQQQVQ…DKPAGQSIWL (101 aa)) are disordered. 2 stretches are compositionally biased toward low complexity: residues 395 to 418 (QQQP…QQQP) and 432 to 444 (QQQQ…QQQQ). The segment covering 445-479 (VPMATTRATQYPPQINSNNFNTNQASVPPQMRSNP) has biased composition (polar residues).

The protein belongs to the protein kinase superfamily. CK1 Ser/Thr protein kinase family. Casein kinase I subfamily. Interacts with HRI1. Interacts with ELP1/IKI3; the interaction leads to ELP1/IKI3 phosphorylation.

Its subcellular location is the cytoplasm. It is found in the nucleus. The protein localises to the nucleolus. The protein resides in the nucleoplasm. The enzyme catalyses L-seryl-[protein] + ATP = O-phospho-L-seryl-[protein] + ADP + H(+). The catalysed reaction is L-threonyl-[protein] + ATP = O-phospho-L-threonyl-[protein] + ADP + H(+). Protein kinase which phosphorylates serine and threonine residues. Can use casein as a substrate. Phosphorylates elongator complex member ELP1/IKI3 on 'Ser-1198' and 'Ser-1202' which promotes the tRNA modification function of the complex. Associated with repair of damaged DNA and meiosis. This chain is Casein kinase I homolog HRR25 (HRR25), found in Saccharomyces cerevisiae (strain ATCC 204508 / S288c) (Baker's yeast).